Reading from the N-terminus, the 415-residue chain is L-cysteine:1D-myo-inositol 2-amino-2-deoxy-alpha-D-glucopyranoside ligase (415 aa).

Cys43 is a Zn(2+) binding site. L-cysteinyl-5'-AMP-binding positions include 43–46 (CGIT), Thr58, and 81–83 (NVT). Residues 45–55 (ITPYDATHLGH) carry the 'HIGH' region motif. The short motif at 187 to 192 (ERGGDP) is the 'ERGGDP' region element. L-cysteinyl-5'-AMP is bound at residue Trp227. A Zn(2+)-binding site is contributed by Cys231. 249 to 251 (GSD) serves as a coordination point for L-cysteinyl-5'-AMP. His256 contacts Zn(2+). Residue Ile283 participates in L-cysteinyl-5'-AMP binding. The short motif at 289–293 (KMSKS) is the 'KMSKS' region element.

Belongs to the class-I aminoacyl-tRNA synthetase family. MshC subfamily. Monomer. It depends on Zn(2+) as a cofactor.

It catalyses the reaction 1D-myo-inositol 2-amino-2-deoxy-alpha-D-glucopyranoside + L-cysteine + ATP = 1D-myo-inositol 2-(L-cysteinylamino)-2-deoxy-alpha-D-glucopyranoside + AMP + diphosphate + H(+). Functionally, catalyzes the ATP-dependent condensation of GlcN-Ins and L-cysteine to form L-Cys-GlcN-Ins. This is L-cysteine:1D-myo-inositol 2-amino-2-deoxy-alpha-D-glucopyranoside ligase from Saccharomonospora viridis (strain ATCC 15386 / DSM 43017 / JCM 3036 / CCUG 5913 / NBRC 12207 / NCIMB 9602 / P101) (Thermoactinomyces viridis).